A 335-amino-acid chain; its full sequence is Protein PXR1 (335 aa).

Residues 25 to 71 (KSRFGHKYLEKLGWEPGKGLGHASHAMSTHIKVTIKDDTMGLGAKLK) form the G-patch domain. The disordered stretch occupies residues 155 to 310 (DDAEDAKVSG…PPTISTRLSV (156 aa)). Over residues 163 to 175 (SGKHRDRKSRAKR) the composition is skewed to basic residues. Residues 183-209 (LKEKCRDIDRTRKSKRKEKEQEKEKNR) show a composition bias toward basic and acidic residues. A compositionally biased stretch (basic residues) spans 226 to 257 (KKDKKDKKEKKEKKEKKEKKEKKHKEKSNKRL).

This sequence belongs to the PINX1 family.

It localises to the nucleus. Its subcellular location is the nucleolus. Involved in rRNA-processing at A0, A1 and A2 sites and negatively regulates telomerase. This Eremothecium gossypii (strain ATCC 10895 / CBS 109.51 / FGSC 9923 / NRRL Y-1056) (Yeast) protein is Protein PXR1 (PXR1).